A 118-amino-acid chain; its full sequence is Large ribosomal subunit protein bL20 (118 aa).

The protein belongs to the bacterial ribosomal protein bL20 family.

Its function is as follows. Binds directly to 23S ribosomal RNA and is necessary for the in vitro assembly process of the 50S ribosomal subunit. It is not involved in the protein synthesizing functions of that subunit. This is Large ribosomal subunit protein bL20 from Francisella tularensis subsp. tularensis (strain WY96-3418).